The following is a 199-amino-acid chain: dITP/XTP pyrophosphatase (199 aa).

12–17 (SGNAGK) is a binding site for substrate. Asp-73 functions as the Proton acceptor in the catalytic mechanism. Asp-73 is a Mg(2+) binding site. Residues Ser-74, 157–160 (FGYD), Lys-180, and 185–186 (HR) each bind substrate.

The protein belongs to the HAM1 NTPase family. Homodimer. Mg(2+) serves as cofactor.

The enzyme catalyses XTP + H2O = XMP + diphosphate + H(+). It catalyses the reaction dITP + H2O = dIMP + diphosphate + H(+). It carries out the reaction ITP + H2O = IMP + diphosphate + H(+). Its function is as follows. Pyrophosphatase that catalyzes the hydrolysis of nucleoside triphosphates to their monophosphate derivatives, with a high preference for the non-canonical purine nucleotides XTP (xanthosine triphosphate), dITP (deoxyinosine triphosphate) and ITP. Seems to function as a house-cleaning enzyme that removes non-canonical purine nucleotides from the nucleotide pool, thus preventing their incorporation into DNA/RNA and avoiding chromosomal lesions. The chain is dITP/XTP pyrophosphatase from Neisseria meningitidis serogroup A / serotype 4A (strain DSM 15465 / Z2491).